Consider the following 340-residue polypeptide: MAQKEIINKKNTQKNSSFIESNNLTSFDFFDAKKNSEIETISTGSLNLDEALGSGGLPLGRIVELYGNESSGKTTIALNAVASFQKAGKTACYIDAEGALDLAYAKSIGIDLNKLLIAHPRHGENAFALIESLIKTNKISLIVIDSVAALIPKQELEGTIEEQTIGLHARMMSKGLRRIQSILPDSKTCVLFINQLREKPGVMFGNNEVTTGGKALRFYSSLRMEAKRVELLKDKFNNYVGIKTKVMVSKNKIAKPFGVAILEIMFNRGFVHEHEVIDLALKFNVVVRAGNSYSFNNESIAVGKEKLLNVLSEKPALFEQIKELTVQQLANKNSFQQTAS.

Position 67-74 (glycine 67–threonine 74) interacts with ATP.

The protein belongs to the RecA family.

Its subcellular location is the cytoplasm. Its function is as follows. Can catalyze the hydrolysis of ATP in the presence of single-stranded DNA, the ATP-dependent uptake of single-stranded DNA by duplex DNA, and the ATP-dependent hybridization of homologous single-stranded DNAs. It interacts with LexA causing its activation and leading to its autocatalytic cleavage. This Mycoplasma genitalium (strain ATCC 33530 / DSM 19775 / NCTC 10195 / G37) (Mycoplasmoides genitalium) protein is Protein RecA.